Here is a 235-residue protein sequence, read N- to C-terminus: Protein FEV (235 aa).

Residues 58–138 (IQLWQFLLEL…HGKRYAYKFD (81 aa)) constitute a DNA-binding region (ETS).

Belongs to the ETS family. As to expression, expressed by serotonergic neurons in anterior and posterior raphe.

It is found in the nucleus. Its function is as follows. Functions as a transcriptional regulator. Functions in the differentiation and the maintenance of the central serotonergic neurons. May play a role in cell growth. The sequence is that of Protein FEV (fev) from Danio rerio (Zebrafish).